The sequence spans 149 residues: Large ribosomal subunit protein uL13 (149 aa).

Belongs to the universal ribosomal protein uL13 family. In terms of assembly, part of the 50S ribosomal subunit.

Functionally, this protein is one of the early assembly proteins of the 50S ribosomal subunit, although it is not seen to bind rRNA by itself. It is important during the early stages of 50S assembly. The sequence is that of Large ribosomal subunit protein uL13 from Borrelia turicatae (strain 91E135).